The primary structure comprises 322 residues: TATA box-binding protein-associated factor RNA polymerase I subunit D (322 aa).

Disordered stretches follow at residues 1–70 (MAQS…SIEP) and 82–116 (FKKK…RITR). At S23 the chain carries Phosphoserine. The span at 82–107 (FKKKKRKKRKKRKYEPKLRPRGRPRG) shows a compositional bias: basic residues. Phosphoserine is present on S137. The segment at 198 to 219 (YMDDDGSLSPIEEPLTEDEATN) is disordered. At S232 the chain carries Phosphoserine. Residues 257–267 (FSKKAKDATHR) are compositionally biased toward basic and acidic residues. The tract at residues 257-276 (FSKKAKDATHREKGHRRTLK) is disordered.

Component of the transcription factor SL1/TIF-IB complex, composed of TBP and at least TAF1A, TAF1B, TAF1C and TAF1D. Interacts with UBTF.

The protein resides in the nucleus. Component of the transcription factor SL1/TIF-IB complex, which is involved in the assembly of the PIC (preinitiation complex) during RNA polymerase I-dependent transcription. The rate of PIC formation probably is primarily dependent on the rate of association of SL1/TIF-IB with the rDNA promoter. SL1/TIF-IB is involved in stabilization of nucleolar transcription factor 1/UBTF on rDNA. Formation of SL1/TIF-IB excludes the association of TBP with TFIID subunits. This Mus musculus (Mouse) protein is TATA box-binding protein-associated factor RNA polymerase I subunit D (Taf1d).